The chain runs to 122 residues: Large ribosomal subunit protein uL14 (122 aa).

This sequence belongs to the universal ribosomal protein uL14 family. Part of the 50S ribosomal subunit. Forms a cluster with proteins L3 and L19. In the 70S ribosome, L14 and L19 interact and together make contacts with the 16S rRNA in bridges B5 and B8.

Its function is as follows. Binds to 23S rRNA. Forms part of two intersubunit bridges in the 70S ribosome. The sequence is that of Large ribosomal subunit protein uL14 from Petrotoga mobilis (strain DSM 10674 / SJ95).